The sequence spans 175 residues: Threonylcarbamoyl-AMP synthase (175 aa).

In terms of domain architecture, YrdC-like spans 1-175 (MLHNDDVIAY…IINGKLIRYV (175 aa)).

Belongs to the SUA5 family. TsaC subfamily.

The protein localises to the cytoplasm. It catalyses the reaction L-threonine + hydrogencarbonate + ATP = L-threonylcarbamoyladenylate + diphosphate + H2O. Functionally, required for the formation of a threonylcarbamoyl group on adenosine at position 37 (t(6)A37) in tRNAs that read codons beginning with adenine. Catalyzes the conversion of L-threonine, HCO(3)(-)/CO(2) and ATP to give threonylcarbamoyl-AMP (TC-AMP) as the acyladenylate intermediate, with the release of diphosphate. In Buchnera aphidicola subsp. Acyrthosiphon pisum (strain APS) (Acyrthosiphon pisum symbiotic bacterium), this protein is Threonylcarbamoyl-AMP synthase.